Consider the following 571-residue polypeptide: DM7 family protein CG15332 (571 aa).

The disordered stretch occupies residues 440-472 (TRDDGINTADYQSQFPELEPEPEPEPEDEGEDV). The span at 457–471 (LEPEPEPEPEDEGED) shows a compositional bias: acidic residues.

Belongs to the DM7 family.

In Drosophila melanogaster (Fruit fly), this protein is DM7 family protein CG15332.